The primary structure comprises 245 residues: Eukaryotic translation initiation factor 6-2 (245 aa).

The protein belongs to the eIF-6 family. As to quaternary structure, monomer. Associates with the 60S ribosomal subunit.

It localises to the cytoplasm. The protein resides in the nucleus. It is found in the nucleolus. Binds to the 60S ribosomal subunit and prevents its association with the 40S ribosomal subunit to form the 80S initiation complex in the cytoplasm. May also be involved in ribosome biogenesis. The protein is Eukaryotic translation initiation factor 6-2 of Arabidopsis thaliana (Mouse-ear cress).